The following is an 824-amino-acid chain: Fibroblast growth factor receptor 2 (824 aa).

A signal peptide spans 1-21 (MFSWSYLMGLVMVATATLSLA). Over 22–374 (RPSYNIAEDT…LDSSSSEYTE (353 aa)) the chain is Extracellular. One can recognise an Ig-like C2-type 1 domain in the interval 25–125 (YNIAEDTTLE…ETRYFIVNIT (101 aa)). An intrachain disulfide couples Cys-62 to Cys-107. N-linked (GlcNAc...) asparagine glycans are attached at residues Asn-83, Asn-123, and Asn-128. Residues 125-152 (TDGNSSGDDEDDNDGSEDFTNDNNHKRA) form a disordered region. Residues 131 to 144 (GDDEDDNDGSEDFT) are compositionally biased toward acidic residues. Ig-like C2-type domains are found at residues 153–246 (PYWT…YHLD) and 254–356 (PPIL…AWLT). Residues 160 to 177 (KLEKKLHAVPAANTVKFR) are heparin-binding. Residues Cys-178 and Cys-230 are joined by a disulfide bond. Residues Asn-227, Asn-240, Asn-264, Asn-295, Asn-316, and Asn-329 are each glycosylated (N-linked (GlcNAc...) asparagine). A disulfide bridge connects residues Cys-277 and Cys-340. The chain crosses the membrane as a helical span at residues 375–395 (IAIYCVGGFLIACMIGTIMMC). Topologically, residues 396–824 (HMKGRGKKSD…PLKHEATQPA (429 aa)) are cytoplasmic. Tyr-463 carries the post-translational modification Phosphotyrosine; by autocatalysis. Residues 478-767 (LTLGKPLGEG…LTQTTNEEYL (290 aa)) enclose the Protein kinase domain. ATP contacts are provided by residues 484–492 (LGEGCFGQV), Lys-514, 562–564 (EYA), and Asn-568. The residue at position 583 (Tyr-583) is a Phosphotyrosine; by autocatalysis. The active-site Proton acceptor is the Asp-623. Phosphotyrosine; by autocatalysis is present on residues Tyr-653, Tyr-654, and Tyr-766. Residues 801-824 (SMNLAFPNPNTQMAPLKHEATQPA) form a disordered region.

It belongs to the protein kinase superfamily. Tyr protein kinase family. Fibroblast growth factor receptor subfamily. In terms of assembly, monomer. Homodimer after ligand binding. Autophosphorylated. Binding of FGF family members together with heparan sulfate proteoglycan or heparin promotes receptor dimerization and autophosphorylation on tyrosine residues. Autophosphorylation occurs in trans between the two FGFR molecules present in the dimer. Post-translationally, N-glycosylated in the endoplasmic reticulum. The N-glycan chains undergo further maturation to an Endo H-resistant form in the Golgi apparatus. In terms of processing, ubiquitinated. FGFR2 is rapidly ubiquitinated after autophosphorylation, leading to internalization and degradation. Subject to degradation both in lysosomes and by the proteasome.

The protein resides in the cell membrane. It is found in the golgi apparatus. It localises to the cytoplasmic vesicle. The enzyme catalyses L-tyrosyl-[protein] + ATP = O-phospho-L-tyrosyl-[protein] + ADP + H(+). Present in an inactive conformation in the absence of bound ligand. Ligand binding leads to dimerization and activation by autophosphorylation on tyrosine residues. Its function is as follows. Tyrosine-protein kinase that acts as a cell-surface receptor for fibroblast growth factors and plays an essential role in the regulation of cell proliferation, differentiation, migration and apoptosis, and in the regulation of embryonic development. Required for normal embryonic patterning, limb bud development, lung morphogenesis, osteogenesis and skin development. Plays an essential role in the regulation of osteoblast differentiation, proliferation and apoptosis, and is required for normal skeleton development. Promotes cell proliferation in keratinocytes and immature osteoblasts, but promotes apoptosis in differentiated osteoblasts. Phosphorylates PLCG1, FRS2 and PAK4. Ligand binding leads to the activation of several signaling cascades. Activation of PLCG1 leads to the production of the cellular signaling molecules diacylglycerol and inositol 1,4,5-trisphosphate. Phosphorylation of FRS2 triggers recruitment of GRB2, GAB1, PIK3R1 and SOS1, and mediates activation of RAS, MAPK1/ERK2, MAPK3/ERK1 and the MAP kinase signaling pathway, as well as of the AKT1 signaling pathway. FGFR2 signaling is down-regulated by ubiquitination, internalization and degradation. Mutations that lead to constitutive kinase activation or impair normal FGFR2 maturation, internalization and degradation lead to aberrant signaling. Over-expressed FGFR2 promotes activation of STAT1. The polypeptide is Fibroblast growth factor receptor 2 (FGFR2) (Pleurodeles waltl (Iberian ribbed newt)).